The primary structure comprises 334 residues: Phenylalanine--tRNA ligase alpha subunit (334 aa).

Glu-249 contributes to the Mg(2+) binding site.

It belongs to the class-II aminoacyl-tRNA synthetase family. Phe-tRNA synthetase alpha subunit type 1 subfamily. Tetramer of two alpha and two beta subunits. Requires Mg(2+) as cofactor.

The protein localises to the cytoplasm. The enzyme catalyses tRNA(Phe) + L-phenylalanine + ATP = L-phenylalanyl-tRNA(Phe) + AMP + diphosphate + H(+). The polypeptide is Phenylalanine--tRNA ligase alpha subunit (Desulfatibacillum aliphaticivorans).